A 361-amino-acid chain; its full sequence is S-adenosylmethionine decarboxylase proenzyme (361 aa).

Residues Glu8 and Glu11 contribute to the active site. The active-site Schiff-base intermediate with substrate; via pyruvic acid is Ser68. Pyruvic acid (Ser); by autocatalysis is present on Ser68. Residue Cys82 is the Proton donor; for catalytic activity of the active site. Active-site proton acceptor; for processing activity residues include Ser234 and His247. Positions 341–361 are disordered; that stretch reads SCGSPRSTLHRCWSETENEEE.

It belongs to the eukaryotic AdoMetDC family. It depends on pyruvate as a cofactor. Post-translationally, is synthesized initially as an inactive proenzyme. Formation of the active enzyme involves a self-maturation process in which the active site pyruvoyl group is generated from an internal serine residue via an autocatalytic post-translational modification. Two non-identical subunits are generated from the proenzyme in this reaction, and the pyruvate is formed at the N-terminus of the alpha chain, which is derived from the carboxyl end of the proenzyme. The post-translation cleavage follows an unusual pathway, termed non-hydrolytic serinolysis, in which the side chain hydroxyl group of the serine supplies its oxygen atom to form the C-terminus of the beta chain, while the remainder of the serine residue undergoes an oxidative deamination to produce ammonia and the pyruvoyl group blocking the N-terminus of the alpha chain.

The catalysed reaction is S-adenosyl-L-methionine + H(+) = S-adenosyl 3-(methylsulfanyl)propylamine + CO2. It functions in the pathway amine and polyamine biosynthesis; S-adenosylmethioninamine biosynthesis; S-adenosylmethioninamine from S-adenosyl-L-methionine: step 1/1. The protein is S-adenosylmethionine decarboxylase proenzyme (SAMDC) of Helianthus annuus (Common sunflower).